A 389-amino-acid chain; its full sequence is Chalcone synthase 4 (389 aa).

Cys164 is a catalytic residue.

This sequence belongs to the thiolase-like superfamily. Chalcone/stilbene synthases family.

It catalyses the reaction (E)-4-coumaroyl-CoA + 3 malonyl-CoA + 3 H(+) = 2',4,4',6'-tetrahydroxychalcone + 3 CO2 + 4 CoA. The protein operates within secondary metabolite biosynthesis; flavonoid biosynthesis. Its function is as follows. The primary product of this enzyme is 4,2',4',6'-tetrahydroxychalcone (also termed naringenin-chalcone or chalcone) which can under specific conditions spontaneously isomerize into naringenin. The chain is Chalcone synthase 4 (CHS4) from Pisum sativum (Garden pea).